The primary structure comprises 499 residues: Probable alpha-L-arabinofuranosidase B (499 aa).

An N-terminal signal peptide occupies residues 1 to 17; that stretch reads MFSRRNLLALGLAATVS. Residues 18-335 form a catalytic region; that stretch reads AGPCDIYEAG…ENIVAAKYVV (318 aa). 3 disulfides stabilise this stretch: Cys-21/Cys-31, Cys-81/Cys-86, and Cys-176/Cys-177. An N-linked (GlcNAc...) asparagine glycan is attached at Asn-83. Asn-202 is a glycosylation site (N-linked (GlcNAc...) asparagine). Asp-219 is a binding site for substrate. Glu-221 functions as the Nucleophile in the catalytic mechanism. Substrate contacts are provided by Asn-222, Asn-223, Gly-296, His-416, Asn-418, Phe-419, Asp-435, His-463, Glu-465, Leu-468, and Asp-488. The interval 336 to 499 is ABD; sequence GSLVSGPSFT…SFEIETAFAS (164 aa). A disulfide bond links Cys-401 and Cys-439.

It belongs to the glycosyl hydrolase 54 family.

Its subcellular location is the secreted. The catalysed reaction is Hydrolysis of terminal non-reducing alpha-L-arabinofuranoside residues in alpha-L-arabinosides.. Its pathway is glycan metabolism; L-arabinan degradation. Its function is as follows. Alpha-L-arabinofuranosidase involved in the degradation of arabinoxylan, a major component of plant hemicellulose. Able to hydrolyze 1,5-, 1,3- and 1,2-alpha-linkages not only in L-arabinofuranosyl oligosaccharides, but also in polysaccharides containing terminal non-reducing L-arabinofuranoses in side chains, like L-arabinan, arabinogalactan and arabinoxylan. The protein is Probable alpha-L-arabinofuranosidase B (abfB) of Aspergillus awamori (Black koji mold).